The chain runs to 349 residues: UPF0284 protein MM_0708 (349 aa).

It belongs to the UPF0284 family.

This Methanosarcina mazei (strain ATCC BAA-159 / DSM 3647 / Goe1 / Go1 / JCM 11833 / OCM 88) (Methanosarcina frisia) protein is UPF0284 protein MM_0708.